A 126-amino-acid polypeptide reads, in one-letter code: Methylglyoxal synthase (126 aa).

The MGS-like domain maps to 1 to 126; it reads MKALALIAHD…IAWIRKGTPQ (126 aa). Substrate-binding positions include H9, K13, 35–38, and 55–56; these read TGTT and SG. The active-site Proton donor/acceptor is D61. H88 contributes to the substrate binding site.

It belongs to the methylglyoxal synthase family.

The catalysed reaction is dihydroxyacetone phosphate = methylglyoxal + phosphate. Functionally, catalyzes the formation of methylglyoxal from dihydroxyacetone phosphate. This is Methylglyoxal synthase from Thermus thermophilus (strain ATCC BAA-163 / DSM 7039 / HB27).